Here is a 278-residue protein sequence, read N- to C-terminus: HTH-type transcriptional activator RhaS (278 aa).

The 99-residue stretch at 174 to 272 folds into the HTH araC/xylS-type domain; it reads NLLLAWLEDH…NWSPRDIRQG (99 aa). 2 DNA-binding regions (H-T-H motif) span residues 191-212 and 239-262; these read DAVA…KQQT and VTDI…RREF.

As to quaternary structure, binds DNA as a dimer.

The protein resides in the cytoplasm. Functionally, activates expression of the rhaBAD and rhaT operons. The chain is HTH-type transcriptional activator RhaS from Escherichia coli O127:H6 (strain E2348/69 / EPEC).